We begin with the raw amino-acid sequence, 118 residues long: Large ribosomal subunit protein bL20 (118 aa).

Belongs to the bacterial ribosomal protein bL20 family.

Functionally, binds directly to 23S ribosomal RNA and is necessary for the in vitro assembly process of the 50S ribosomal subunit. It is not involved in the protein synthesizing functions of that subunit. The protein is Large ribosomal subunit protein bL20 of Lachnoclostridium phytofermentans (strain ATCC 700394 / DSM 18823 / ISDg) (Clostridium phytofermentans).